We begin with the raw amino-acid sequence, 413 residues long: Peptidase T (413 aa).

Position 81 (histidine 81) interacts with Zn(2+). The active site involves aspartate 83. Aspartate 143 is a Zn(2+) binding site. Catalysis depends on glutamate 178, which acts as the Proton acceptor. The Zn(2+) site is built by glutamate 179, aspartate 201, and histidine 383.

The protein belongs to the peptidase M20B family. As to quaternary structure, homodimer. Zn(2+) serves as cofactor.

The protein localises to the cytoplasm. It catalyses the reaction Release of the N-terminal residue from a tripeptide.. With respect to regulation, inhibited by EDTA, by the reducing agents dithiothreitol and 13-mercaptoethanol, and by the divalent cation Cu(2+). Its function is as follows. Cleaves the N-terminal amino acid of tripeptides. Has a broad specificity for tripeptides with no clear preference for a particular tripeptide. Tripeptides with proline in the second position are an exception and are not hydrolyzed. Does not hydrolyze dipeptides, tetrapeptides, or oligopeptides. The sequence is that of Peptidase T (pepT) from Lactococcus lactis subsp. cremoris (Streptococcus cremoris).